The following is a 1202-amino-acid chain: Putative late blight resistance protein homolog R1B-8 (1202 aa).

2 coiled-coil regions span residues 345 to 368 and 437 to 459; these read RYSD…ESLQ and LRMN…RLLN. The region spanning 426–741 is the NB-ARC domain; sequence IARTSSQLAR…ISESFIKSCE (316 aa). Position 471-478 (471-478) interacts with ATP; it reads GMPGLGKT. LRR repeat units follow at residues 865–889, 908–936, 1011–1036, 1040–1059, 1060–1084, 1086–1111, and 1128–1151; these read FKFL…LFYL, LWNL…VWDM, PIRL…ISAP, YLKL…TADH, LKHL…VSNG, FPQL…VFPN, and SCFM…VVQS.

Belongs to the disease resistance NB-LRR family.

The protein resides in the cytoplasm. It is found in the membrane. In terms of biological role, confers resistance to late blight (Phytophthora infestans) races carrying the avirulence gene Avr1. Resistance proteins guard the plant against pathogens that contain an appropriate avirulence protein via an indirect interaction with this avirulence protein. That triggers a defense system including the hypersensitive response, which restricts the pathogen growth. The chain is Putative late blight resistance protein homolog R1B-8 (R1B-8) from Solanum demissum (Wild potato).